The chain runs to 201 residues: Rho GDP-dissociation inhibitor 2 (201 aa).

The disordered stretch occupies residues 1 to 38 (MTEKAPEPHVEEDDDDELDSKLNYKPPPQKSLKELQEM). At Thr2 the chain carries N-acetylthreonine. Lys21 bears the N6-acetyllysine mark. Tyr24 carries the phosphotyrosine modification. Residues Lys25, Lys40, Lys47, Lys102, and Lys124 each carry the N6-acetyllysine modification. A Phosphoserine modification is found at Ser145. The residue at position 175 (Lys175) is an N6-acetyllysine.

The protein belongs to the Rho GDI family. Interacts with RHOA. Interacts with RAC1. Interacts with RAC2. Interacts with CDC42. In terms of tissue distribution, detected in bone marrow, thymus and spleen.

The protein localises to the cytoplasm. Its subcellular location is the cytosol. Functionally, regulates the GDP/GTP exchange reaction of the Rho proteins by inhibiting the dissociation of GDP from them, and the subsequent binding of GTP to them. Regulates reorganization of the actin cytoskeleton mediated by Rho family members. This is Rho GDP-dissociation inhibitor 2 (ARHGDIB) from Homo sapiens (Human).